Consider the following 159-residue polypeptide: Transcriptional repressor NrdR (159 aa).

A zinc finger lies at 3 to 34; that stretch reads CPFCRHEDTQVVDSRVSEDGAAIRRRRRCSAC. The ATP-cone domain maps to 49–139; that stretch reads PAVVKKDGSR…VYRRFEDVSE (91 aa).

It belongs to the NrdR family. Zn(2+) serves as cofactor.

Its function is as follows. Negatively regulates transcription of bacterial ribonucleotide reductase nrd genes and operons by binding to NrdR-boxes. In Burkholderia ambifaria (strain MC40-6), this protein is Transcriptional repressor NrdR.